We begin with the raw amino-acid sequence, 153 residues long: Vasotocin-neurophysin VT 1 (153 aa).

Residues 1–19 (MPQCALLLSLLGLLALSSA) form the signal peptide. Cysteine 20 and cysteine 25 are oxidised to a cystine. Position 28 is a glycine amide (glycine 28). 7 disulfide bridges follow: cysteine 41–cysteine 85, cysteine 44–cysteine 58, cysteine 52–cysteine 75, cysteine 59–cysteine 65, cysteine 92–cysteine 105, cysteine 99–cysteine 117, and cysteine 106–cysteine 111.

It belongs to the vasopressin/oxytocin family. Post-translationally, seven disulfide bonds are present in neurophysin.

It is found in the secreted. Functionally, vasotocin is probably an antidiuretic hormone. In Takifugu rubripes (Japanese pufferfish), this protein is Vasotocin-neurophysin VT 1.